The chain runs to 1183 residues: MKILLSKQQTRKIAIVSETHGLVFRPINSKNSRRSTCAVELVPKAELNGNGFRRLSNHEIYGFIGLIEIEGLMFIATITGKSKVAQPIPNKTVNKIYAVDFFCLNNSKWDFMDIDSSGYPIVTNDGDFAISSPPSISTHSSRSSLRSSSSRSLNAQEQAPKHPCHELRKLLSNGSFYYSTDFDLTCTLQKRGFTEHSLSFDDFDREFMWNSFLMDEIITYRDRLDVTAKELLDQRGFLTTVIRGFAETIFSYINRLKVGLTIISRQSWKRAGTRFNARGIDDDGHVANFVETEMIMYSSQYCYAFTQIRGSLPIFWEQDTSLISPKIQITRSVEATQPTFDEHFIRLFKKYGPVHIINLLSTKSSEIQLSRRYKEQLKNSEKMKIGRDVFLTSFDFHRETSQDGFAAASRIIPKIRNTILDAGYFSYDVKEGRLISEQDGVFRTNCLDCLDRTNLIQQTISLAVFKLFLEDFRLVKPSSFIDDNEFVQKVNALWADNGDQISQIYTGTNALKSSYSRKGKMSFSGALSDATKSVSRMYINNFVDKGKQQNIDTLLGKLPHQQVVELYDPICEYVNERLLESEEKFTTHSNINLFVGTFNVNGNSRRADLSKWLFPIGDKFKPDVVVLGLQEVIELTAGSILNADYTKSSFWETMVTDCLNQYEEKYLLLRVEQMSSLLILFFARSDRAYNIKEVGGSTKKTGFGGITGNKGAVAIRFDYGATSFCFVNTHLSAGASNIDERRNDYNNIYRNITFPRSKTIPHHDSLFWLGDLNYRITLTNDEVRRELRAQKDGYIDRLLQYDQLTQEINEGVVFQGFKEPTLQFRPTYKYDYGTDNYDTSEKARTPSWTDRIIYKGENLHPLAYSDAPLKISDHKPVYAAYRANVKFVDEKEKLNLVEKLYAEYKNTHPEALTTGPDELSHARMEKQKESIPLDATVQSAGIKLIDLDDTSSCVSPLLSGPSPQPSVVGPGGLSNVSPDKSKLNVLPPPPPTSRHNKEPSSKLLSPTKEISIVSVSPRKGESNLPALERHSTPKPLPPVPALSLSKPVSLQKSSSELQHAKETIDNGKIVPRPCPPIRRKSSTAPDEISTSTKNSGVSTTEDPEPAKASTKPEKPPVVKKPHYLSVAANKLNTSQEHSIKVSPSNSKSEEELPCKKKSKPKVPAKNPELEKLSVHPLKPCDPN.

Residues 133-153 (PPSISTHSSRSSLRSSSSRSL) are compositionally biased toward low complexity. The disordered stretch occupies residues 133 to 161 (PPSISTHSSRSSLRSSSSRSLNAQEQAPK). Ser152 bears the Phosphoserine mark. The SAC domain occupies 167 to 507 (LRKLLSNGSF…GDQISQIYTG (341 aa)). The residue at position 522 (Ser522) is a Phosphoserine. Low complexity predominate over residues 955 to 968 (SPLLSGPSPQPSVV). Residues 955–1183 (SPLLSGPSPQ…VHPLKPCDPN (229 aa)) form a disordered region. Phosphoserine is present on residues Ser1005 and Ser1016. At Thr1032 the chain carries Phosphothreonine. Polar residues-rich tracts occupy residues 1046–1057 (KPVSLQKSSSEL), 1082–1100 (STAPDEISTSTKNSGVSTT), and 1130–1145 (KLNTSQEHSIKVSPSN). Ser1095 carries the post-translational modification Phosphoserine.

It belongs to the synaptojanin family. The protein in the central section; belongs to the inositol 1,4,5-trisphosphate 5-phosphatase family. In terms of assembly, interacts (via SAC domain) with BSP1; the interaction is direct. Interacts with ABP1.

Its subcellular location is the cytoplasm. It localises to the cytoskeleton. The protein resides in the actin patch. The enzyme catalyses a 1,2-diacyl-sn-glycero-3-phospho-(1D-myo-inositol-4,5-bisphosphate) + H2O = a 1,2-diacyl-sn-glycero-3-phospho-(1D-myo-inositol 4-phosphate) + phosphate. Its function is as follows. Dephosphorylates a number of phosphatidylinositols (PIs) like phosphatidylinositol 4,5-bisphosphate (PtdIns(4,5)P2), but also phosphatidylinositol 3-phosphate (PtdIns(3)P), phosphatidylinositol 4-phosphate (PtdIns(4)P), and phosphatidylinositol 3,5-bisphosphate (PtdIns(3,5)P2). Controls the cellular levels and subcellular distribution of phosphatidylinositol 3-phosphate and phosphatidylinositol 4,5-bisphosphate. Specifically functions within the early endocytic pathway and actin organization. This is Polyphosphatidylinositol phosphatase INP52 from Saccharomyces cerevisiae (strain ATCC 204508 / S288c) (Baker's yeast).